The primary structure comprises 158 residues: Transcription elongation factor GreA (158 aa).

The stretch at 5–75 (EKLPMLAEGY…DLEDRVSRAQ (71 aa)) forms a coiled coil.

Belongs to the GreA/GreB family.

In terms of biological role, necessary for efficient RNA polymerase transcription elongation past template-encoded arresting sites. The arresting sites in DNA have the property of trapping a certain fraction of elongating RNA polymerases that pass through, resulting in locked ternary complexes. Cleavage of the nascent transcript by cleavage factors such as GreA or GreB allows the resumption of elongation from the new 3'terminus. GreA releases sequences of 2 to 3 nucleotides. The polypeptide is Transcription elongation factor GreA (Novosphingobium aromaticivorans (strain ATCC 700278 / DSM 12444 / CCUG 56034 / CIP 105152 / NBRC 16084 / F199)).